The chain runs to 166 residues: NAD(P)H-quinone oxidoreductase subunit I, chloroplastic (166 aa).

4Fe-4S ferredoxin-type domains follow at residues 55–84 and 95–124; these read GRIH…VDWK and LNYS…MTEE. Cys-64, Cys-67, Cys-70, Cys-74, Cys-104, Cys-107, Cys-110, and Cys-114 together coordinate [4Fe-4S] cluster.

This sequence belongs to the complex I 23 kDa subunit family. As to quaternary structure, NDH is composed of at least 16 different subunits, 5 of which are encoded in the nucleus. It depends on [4Fe-4S] cluster as a cofactor.

Its subcellular location is the plastid. The protein resides in the chloroplast thylakoid membrane. It catalyses the reaction a plastoquinone + NADH + (n+1) H(+)(in) = a plastoquinol + NAD(+) + n H(+)(out). It carries out the reaction a plastoquinone + NADPH + (n+1) H(+)(in) = a plastoquinol + NADP(+) + n H(+)(out). Its function is as follows. NDH shuttles electrons from NAD(P)H:plastoquinone, via FMN and iron-sulfur (Fe-S) centers, to quinones in the photosynthetic chain and possibly in a chloroplast respiratory chain. The immediate electron acceptor for the enzyme in this species is believed to be plastoquinone. Couples the redox reaction to proton translocation, and thus conserves the redox energy in a proton gradient. This chain is NAD(P)H-quinone oxidoreductase subunit I, chloroplastic, found in Melampodium leucanthum (Black foot daisy).